The chain runs to 203 residues: Large ribosomal subunit protein bL25 (203 aa).

The segment at 182 to 203 (EITEEPETEEKKEEGASSVSNS) is disordered.

Belongs to the bacterial ribosomal protein bL25 family. CTC subfamily. As to quaternary structure, part of the 50S ribosomal subunit; part of the 5S rRNA/L5/L18/L25 subcomplex. Contacts the 5S rRNA. Binds to the 5S rRNA independently of L5 and L18.

In terms of biological role, this is one of the proteins that binds to the 5S RNA in the ribosome where it forms part of the central protuberance. The protein is Large ribosomal subunit protein bL25 of Caldicellulosiruptor saccharolyticus (strain ATCC 43494 / DSM 8903 / Tp8T 6331).